A 158-amino-acid polypeptide reads, in one-letter code: tRNA (cytidine(34)-2'-O)-methyltransferase (158 aa).

S-adenosyl-L-methionine is bound by residues Gly-103, Ile-123, and Ser-131.

This sequence belongs to the class IV-like SAM-binding methyltransferase superfamily. RNA methyltransferase TrmH family. TrmL subfamily. Homodimer.

Its subcellular location is the cytoplasm. The enzyme catalyses cytidine(34) in tRNA + S-adenosyl-L-methionine = 2'-O-methylcytidine(34) in tRNA + S-adenosyl-L-homocysteine + H(+). The catalysed reaction is 5-carboxymethylaminomethyluridine(34) in tRNA(Leu) + S-adenosyl-L-methionine = 5-carboxymethylaminomethyl-2'-O-methyluridine(34) in tRNA(Leu) + S-adenosyl-L-homocysteine + H(+). Functionally, methylates the ribose at the nucleotide 34 wobble position in the two leucyl isoacceptors tRNA(Leu)(CmAA) and tRNA(Leu)(cmnm5UmAA). Catalyzes the methyl transfer from S-adenosyl-L-methionine to the 2'-OH of the wobble nucleotide. This chain is tRNA (cytidine(34)-2'-O)-methyltransferase, found in Ancylobacter novellus (strain ATCC 8093 / DSM 506 / JCM 20403 / CCM 1077 / IAM 12100 / NBRC 12443 / NCIMB 10456) (Starkeya novella).